The sequence spans 198 residues: KHSLPDLPYDYGALEPHINAQIMQLHHSKHHAAYVNNLNVTEEKYQEALAKGDVTAQIALQPALKFNGGGHINHSIFWTNLSPNGGGEPKGELLEAIKRDFGSFDKFKEKLTAASVGVQGSGWGWLGFNKERGHLQIAACPNQDPLQGTTGLIPLLGIDVWEHAYYLQYKNVRPDYLKAIWNVINWENVTERYMACKK.

His26 serves as a coordination point for Mn(2+). Tyr34 carries the 3'-nitrotyrosine modification. N6-acetyllysine; alternate is present on residues Lys44 and Lys51. Lys44 and Lys51 each carry N6-succinyllysine; alternate. His74 lines the Mn(2+) pocket. At Lys90 the chain carries N6-acetyllysine. N6-acetyllysine; alternate occurs at positions 98 and 106. Residues Lys98 and Lys106 each carry the N6-succinyllysine; alternate modification. Asp159 and His163 together coordinate Mn(2+). Lys178 is subject to N6-acetyllysine.

The protein belongs to the iron/manganese superoxide dismutase family. Homotetramer. Mn(2+) is required as a cofactor. Nitrated under oxidative stress. Nitration coupled with oxidation inhibits the catalytic activity. Post-translationally, acetylation at Lys-98 decreases enzymatic activity. Deacetylated by SIRT3 upon exposure to ionizing radiations or after long fasting. In terms of processing, polyubiquitinated; leading to proteasomal degradation. Deubiquitinated by USP36 which increases protein stability.

It is found in the mitochondrion matrix. The enzyme catalyses 2 superoxide + 2 H(+) = H2O2 + O2. In terms of biological role, destroys superoxide anion radicals which are normally produced within the cells and which are toxic to biological systems. This Pan troglodytes (Chimpanzee) protein is Superoxide dismutase [Mn], mitochondrial (SOD2).